A 132-amino-acid chain; its full sequence is Small ribosomal subunit protein uS8 (132 aa).

Belongs to the universal ribosomal protein uS8 family. In terms of assembly, part of the 30S ribosomal subunit. Contacts proteins S5 and S12.

Its function is as follows. One of the primary rRNA binding proteins, it binds directly to 16S rRNA central domain where it helps coordinate assembly of the platform of the 30S subunit. The chain is Small ribosomal subunit protein uS8 from Psychrobacter sp. (strain PRwf-1).